The sequence spans 415 residues: Arginine biosynthesis bifunctional protein ArgJ (415 aa).

Substrate-binding residues include threonine 156, lysine 182, threonine 193, glutamate 279, asparagine 410, and threonine 415. Residue threonine 193 is the Nucleophile of the active site.

Belongs to the ArgJ family. In terms of assembly, heterotetramer of two alpha and two beta chains.

The protein resides in the cytoplasm. It carries out the reaction N(2)-acetyl-L-ornithine + L-glutamate = N-acetyl-L-glutamate + L-ornithine. The catalysed reaction is L-glutamate + acetyl-CoA = N-acetyl-L-glutamate + CoA + H(+). It functions in the pathway amino-acid biosynthesis; L-arginine biosynthesis; L-ornithine and N-acetyl-L-glutamate from L-glutamate and N(2)-acetyl-L-ornithine (cyclic): step 1/1. Its pathway is amino-acid biosynthesis; L-arginine biosynthesis; N(2)-acetyl-L-ornithine from L-glutamate: step 1/4. Functionally, catalyzes two activities which are involved in the cyclic version of arginine biosynthesis: the synthesis of N-acetylglutamate from glutamate and acetyl-CoA as the acetyl donor, and of ornithine by transacetylation between N(2)-acetylornithine and glutamate. This chain is Arginine biosynthesis bifunctional protein ArgJ, found in Synechococcus sp. (strain ATCC 27144 / PCC 6301 / SAUG 1402/1) (Anacystis nidulans).